Here is a 1079-residue protein sequence, read N- to C-terminus: Electrogenic sodium bicarbonate cotransporter 1 (1079 aa).

A required for interaction with AHCYL1 region spans residues 1–62 (MEDEAVLDRG…EKKEKERISE (62 aa)). At 1–466 (MEDEAVLDRG…FASDFYDALN (466 aa)) the chain is on the cytoplasmic side. Glu-2 carries the phosphoserine modification. Residue Tyr-30 is modified to Phosphotyrosine. A compositionally biased stretch (basic residues) spans 39–52 (YRRRRRHKRKAGHK). Residues 39-78 (YRRRRRHKRKAGHKEKKEKERISENYSDKSDVENADESSS) are disordered. Positions 53 to 70 (EKKEKERISENYSDKSDV) are enriched in basic and acidic residues. 7 positions are modified to phosphoserine: Ser-61, Ser-65, Ser-68, Ser-223, Ser-232, Ser-233, and Ser-245. Positions 235-266 (SRMFSNPDNGSPAMTHRNLTSSSLNDISDKPE) are disordered. Phosphothreonine occurs at positions 249 and 254. Over residues 251–260 (RNLTSSSLND) the composition is skewed to polar residues. Ser-256, Ser-257, and Ser-262 each carry phosphoserine. Residues 467 to 491 (IQALSAILFIYLATVTNAITFGGLL) traverse the membrane as a helical segment. Over 492–501 (GDATDNMQGV) the chain is Extracellular. Residues 502–520 (LESFLGTAVSGAIFCLFAG) traverse the membrane as a helical segment. Gln-521 is a topological domain (cytoplasmic). Residues 522–542 (PLTILSSTGPVLVFERLLFNF) form a discontinuously helical membrane-spanning segment. The Extracellular segment spans residues 543–550 (SKDHSFDY). Residues 551–571 (LEFRLWIGLWSAFMCLILVAT) traverse the membrane as a helical segment. The Cytoplasmic portion of the chain corresponds to 572–585 (DASFLVQYFTRFTE). The chain crosses the membrane as a helical span at residues 586-609 (EGFSSLISFIFIYDAFKKMIKLAD). 2 N-linked (GlcNAc) asparagine glycosylation sites follow: Ile-597 and Phe-617. The Extracellular portion of the chain corresponds to 610–692 (YYPINSDFRV…GNNCDFVPDI (83 aa)). Residues 693-710 (TLMSFILFLGTYTSSMAM) form a helical membrane-spanning segment. The Cytoplasmic segment spans residues 711-725 (KKFKTSRYFPTTARK). Residues 726–745 (LISDFAIILSILIFCVIDAL) form a helical membrane-spanning segment. Residues 746-779 (VGVDTPKLIVPSEFKPTSPHRGWFVPPFGGNPWW) are Extracellular-facing. The interval 748-779 (VDTPKLIVPSEFKPTSPHRGWFVPPFGGNPWW) is interaction with CA4. A helical membrane pass occupies residues 780 to 807 (VCLAAAIPALLVTILIFMDQQITAVIVN). At 808-819 (RKEHKLKKGAGY) the chain is on the cytoplasmic side. The helical transmembrane segment at 820–836 (HLDLFWVAILMVVCSFM) threads the bilayer. Position 837 (Ala-837) is a topological domain, extracellular. The chain crosses the membrane as a discontinuously helical span at residues 838–855 (LPWYVAATVISIAHIDSL). Residues 856–877 (KMETETSAPGEQPKFLGVREQR) lie on the Cytoplasmic side of the membrane. A helical transmembrane segment spans residues 878–894 (VTGTLVFILTGLSVFMA). The Extracellular segment spans residues 895-901 (PILKFIP). The chain crosses the membrane as a helical span at residues 902-918 (MPVLYGVFLYMGVASLN). Residues 919-960 (GVQFMDRLKLLLMPLKHQPDFIYLRHVPLRRVHLFTSLQVLC) lie on the Cytoplasmic side of the membrane. The discontinuously helical intramembrane region spans 961 to 986 (LALLWILKSTVAAIIFPVMILALVAV). Residues 987-1079 (RKGMDYLFSQ…STFLERHTSC (93 aa)) are Cytoplasmic-facing. Residues 1002 to 1004 (LDD) form a CA2-binding region. The disordered stretch occupies residues 1012–1079 (KKKEDEKKKK…STFLERHTSC (68 aa)). 2 positions are modified to phosphoserine: Ser-1026 and Ser-1029. Ser-1026 is modified (phosphoserine; by PKA). Residues 1030–1033 (DNDD) are CA2-binding. Phosphoserine is present on residues Ser-1034 and Ser-1044. The segment at 1057 to 1059 (FLS) is required for basolateral targeting. A phosphoserine mark is found at Asp-1060, Leu-1064, Ser-1069, and Ser-1078. Positions 1062 to 1079 (KPLDRERSSTFLERHTSC) are enriched in basic and acidic residues.

The protein belongs to the anion exchanger (TC 2.A.31) family. Homodimer. Interacts with CA2/carbonic anhydrase 2 and CA4/carbonic anhydrase 4 which may regulate transporter activity. Isoform 1 but not isoform 2 interacts with AHCYL1 (via PEST domain when phosphorylated); the interaction increases SLC4A4 isoform 1 activity. Interacts with AHCYL2. In terms of processing, phosphorylation of Ser-1026 by PKA increases the binding of CA2 and changes the Na(+):HCO3(-) stoichiometry of the transporter from 3:1 to 2:1. Phosphorylated in presence of STK39 and dephosphorylated in presence of PP1 phosphatase; phosphorylation seems to inhibit SLC4A4 activity. Post-translationally, N-glycosylation is not necessary for the transporter basic functions. As to expression, specifically expressed in kidney and to a lower extent in liver, lung, spleen, brain, skeletal muscle and heart. In kidney, expressed in proximal tubules at the corticomedullary junction. Isoform 2 is specifically expressed in kidney. Isoform 1 is expressed in kidney and pancreas while isoform 3 is specifically expressed in brain (at protein level). In brain, isoform 1 is expressed in astrocytes while isoform 3 is expressed in neurons (at protein level). In the eye, isoform 1 is expressed in cornea, conjunctiva, lens epithelium, ciliary bodies and retina while isoform 2 is detected only in the conjunctiva.

It localises to the basolateral cell membrane. The protein resides in the cell membrane. It catalyses the reaction 2 hydrogencarbonate(out) + Na(+)(out) = 2 hydrogencarbonate(in) + Na(+)(in). The enzyme catalyses 3 hydrogencarbonate(out) + Na(+)(out) = 3 hydrogencarbonate(in) + Na(+)(in). With respect to regulation, inhibited by 4,4'-diisothiocyanatostilbene-2,2'-disulfonic acid (DIDS). In terms of biological role, electrogenic sodium/bicarbonate cotransporter with a Na(+):HCO3(-) stoichiometry varying from 1:2 to 1:3. May regulate bicarbonate influx/efflux at the basolateral membrane of cells and regulate intracellular pH. The protein is Electrogenic sodium bicarbonate cotransporter 1 (Slc4a4) of Rattus norvegicus (Rat).